A 613-amino-acid chain; its full sequence is DNA mismatch repair protein MutL (613 aa).

A disordered region spans residues Glu-364–Ala-393.

The protein belongs to the DNA mismatch repair MutL/HexB family.

Functionally, this protein is involved in the repair of mismatches in DNA. It is required for dam-dependent methyl-directed DNA mismatch repair. May act as a 'molecular matchmaker', a protein that promotes the formation of a stable complex between two or more DNA-binding proteins in an ATP-dependent manner without itself being part of a final effector complex. In Enterobacter sp. (strain 638), this protein is DNA mismatch repair protein MutL.